The following is a 65-amino-acid chain: MPKMKSHRGAAKRFKKTGTGKLKRAKAFKSHILTKKSPKTKRNLRKGGYVSKSEEKVMKKLLPYL.

Residues methionine 1 to alanine 25 form a disordered region.

This sequence belongs to the bacterial ribosomal protein bL35 family.

The polypeptide is Large ribosomal subunit protein bL35 (Clostridium botulinum (strain Alaska E43 / Type E3)).